Reading from the N-terminus, the 220-residue chain is Adenylate kinase (220 aa).

Position 10-15 (10-15) interacts with ATP; sequence GAGKGT. The NMP stretch occupies residues 30-59; that stretch reads STGDMLRAAVKAGSPLGVEAKGYMDAGKLV. Residues threonine 31, arginine 36, 57–59, 85–88, and glutamine 92 contribute to the AMP site; these read KLV and GFPR. Residues 122–159 are LID; sequence GRRTHPASGRTYHVKFNPPKVEGKDDVTGEPLIQRDDD. Residues arginine 123 and 132–133 each bind ATP; that span reads TY. The AMP site is built by arginine 156 and arginine 167. Glycine 206 is an ATP binding site.

Belongs to the adenylate kinase family. As to quaternary structure, monomer.

It is found in the cytoplasm. The catalysed reaction is AMP + ATP = 2 ADP. It functions in the pathway purine metabolism; AMP biosynthesis via salvage pathway; AMP from ADP: step 1/1. Functionally, catalyzes the reversible transfer of the terminal phosphate group between ATP and AMP. Plays an important role in cellular energy homeostasis and in adenine nucleotide metabolism. The sequence is that of Adenylate kinase from Burkholderia ambifaria (strain ATCC BAA-244 / DSM 16087 / CCUG 44356 / LMG 19182 / AMMD) (Burkholderia cepacia (strain AMMD)).